Consider the following 2822-residue polypeptide: Piezo-type mechanosensitive ion channel component 2 (2822 aa).

The Cytoplasmic portion of the chain corresponds to 1–12 (MASEVVCGLIFR). The chain crosses the membrane as a helical span at residues 13-24 (LLLPICLAVACA). Residues 25-30 (FRYNGL) are Extracellular-facing. The helical transmembrane segment at 31–43 (SFVYLIYLLLIPL) threads the bilayer. The Cytoplasmic portion of the chain corresponds to 44-50 (FSEPTKA). The chain crosses the membrane as a helical span at residues 51–76 (TMQGHTGRLLQSLCITSLSFLLLHII). Residues 77–122 (FHITLASLEAQHRITPAYNCSTWEKTFRQIGFESLKGADAGNGIRV) lie on the Extracellular side of the membrane. N-linked (GlcNAc...) asparagine glycosylation occurs at Asn-95. A helical transmembrane segment spans residues 123-141 (FVPDIGMFIASLTIWLVCR). Residues 142–221 (TIVKKPDTEE…KEFIGNMITT (80 aa)) lie on the Cytoplasmic side of the membrane. Residues 222 to 237 (AGKVVVTILLGSSGMM) traverse the membrane as a helical segment. Residues 238–240 (LPS) are Extracellular-facing. Residues 241–258 (LTSAVYFFVFLGLCTWWS) traverse the membrane as a helical segment. Over 259–264 (WCRTFD) the chain is Cytoplasmic. The chain crosses the membrane as a helical span at residues 265-287 (PLLFGCLCVLLAIFTAGHLIGLY). At 288–335 (LYQFQFFQEAVPPNDYYARLFGIKSVIQTDCASTWKIIVNPDLSWYHH) the chain is on the extracellular side. The chain crosses the membrane as a helical span at residues 336 to 355 (ANPILLLVMYYTLATLIRIW). The Cytoplasmic segment spans residues 356–492 (LQEPLVQEEM…SVRMHAMVAV (137 aa)). Positions 450 to 481 (YRWEPSEESSEKKEEEEDKREDSEGEGSQEEK) are disordered. The stretch at 455–482 (SEESSEKKEEEEDKREDSEGEGSQEEKR) forms a coiled coil. Residues 463-477 (EEEEDKREDSEGEGS) are compositionally biased toward acidic residues. The helical transmembrane segment at 493 to 514 (FQFIMKQSYICALIAMMAWSIT) threads the bilayer. The Extracellular segment spans residues 515-519 (YHSWL). A helical transmembrane segment spans residues 520–531 (TFVLLIWSCTLW). At 532–535 (MIRN) the chain is on the cytoplasmic side. A helical membrane pass occupies residues 536-562 (RRKYAMISSPFMVVYANLLLVLQYIWS). Residues 563–583 (FELPEIKKVPGFLEKKEPGEL) are Extracellular-facing. Residues 584–614 (ASKILFTITFWLLLRQHLTEQKALREKEALL) traverse the membrane as a helical segment. Residues 615-689 (SEVKIGSQEL…GNLVVALFIK (75 aa)) are Cytoplasmic-facing. Acidic residues-rich tracts occupy residues 624 to 633 (LEEKEDEELQ) and 643 to 652 (EKEEEEEEEI). Residues 624 to 668 (LEEKEDEELQDVQVEGEPTEKEEEEEEEIKEERHEVKKEEEEEVE) form a disordered region. Basic and acidic residues predominate over residues 653-662 (KEERHEVKKE). The helical transmembrane segment at 690 to 703 (YWIYVCGGMFFFVS) threads the bilayer. Residues 704 to 709 (FEGKIV) are Extracellular-facing. Residues 710–728 (MYKIIYMVLFLFCVALYQV) form a helical membrane-spanning segment. Topologically, residues 729 to 737 (HYEWWRKIL) are cytoplasmic. The chain crosses the membrane as a helical span at residues 738–757 (KYFWMSVVIYTMLVLIFIYT). The Extracellular portion of the chain corresponds to 758 to 789 (YQFENFPGLWQNMTGLKKEKLEDLGLKQFTVA). A helical membrane pass occupies residues 790–811 (ELFTRIFIPTSFLLVCILHLHY). Residues 812–957 (FHDRFLELTD…QVFMWWILEL (146 aa)) lie on the Cytoplasmic side of the membrane. Ser-856 carries the phosphoserine modification. The segment covering 875 to 901 (QKLAESGEERPEECVKKTEKGEAGKDS) has biased composition (basic and acidic residues). The tract at residues 875–919 (QKLAESGEERPEECVKKTEKGEAGKDSDESEEEEDEEEESEEEES) is disordered. Acidic residues predominate over residues 902–919 (DESEEEEDEEEESEEEES). A helical membrane pass occupies residues 958–973 (HIIKIVSSYIIWVTVK). At 974–979 (EVSLFN) the chain is on the extracellular side. A helical transmembrane segment spans residues 980–989 (YVFLISWAFA). Residues 990–997 (LPYAKLRR) are Cytoplasmic-facing. Residues 998–1018 (AASSVCTVWTCVIIVCKMLYQ) traverse the membrane as a helical segment. At 1019–1074 (LQTIKPENFSVNCSLPNENQTNIPLHELNKSLLYSAPVDPTEWVGLRKSSPLLVYL) the chain is on the extracellular side. Asn-1030 is a glycosylation site (N-linked (GlcNAc...) asparagine). Cys-1031 and Cys-1209 are disulfide-bonded. Residues 1075–1099 (RNNLLMLAILAFEVTVYRHQEYYRG) form a helical membrane-spanning segment. Over 1100–1140 (RNNLTAPVSKTIFHDITRLHLDDGLINCAKYFVNYFFYKFG) the chain is Cytoplasmic. A helical membrane pass occupies residues 1141 to 1155 (LETCFLMSVNVIGQR). At 1156–1157 (MD) the chain is on the extracellular side. The helical transmembrane segment at 1158–1171 (FYAMIHACWLIGVL) threads the bilayer. Residues 1172 to 1182 (YRRRRKAIAEV) are Cytoplasmic-facing. Residues 1183-1202 (WPKYCCFLACIITFQYFVCI) traverse the membrane as a helical segment. Topologically, residues 1203-1239 (GIPPAPCRDYPWRFKGAYFNDNIIKWLYFPDFIVRPN) are extracellular. Residues 1240-1260 (PVFLVYDFMLLLCASLQRQIF) traverse the membrane as a helical segment. Residues 1261-1314 (EDENKAAVRIMAGDNVEICMNLDAASFSQHNPVPDFIHCRSYLDMSKVIIFSYL) lie on the Cytoplasmic side of the membrane. Residues 1315-1327 (FWFVLTIIFITGT) traverse the membrane as a helical segment. The Extracellular segment spans residues 1328-1333 (TRISIF). Residues 1334–1346 (CMGYLVACFYFLL) form a helical membrane-spanning segment. The Cytoplasmic portion of the chain corresponds to 1347–1355 (FGGDLLLKP). The helical transmembrane segment at 1356 to 1381 (IKSILRYWDWLIAYNVFVITMKNILS) threads the bilayer. Residues 1382–1430 (IGACGYIGALVRNSCWLIQAFSLACTVKGYQMPEDDSRCKLPSGEAGII) are Extracellular-facing. Residues 1431–1447 (WDSICFAFLLLQRRVFM) traverse the membrane as a helical segment. Residues 1448–1991 (SYYFLHVVAD…YAMYNTLVAR (544 aa)) are Cytoplasmic-facing. A coiled-coil region spans residues 1475 to 1515 (TIVKAVKARIEEEKKSMDQLKRQMDRIKARQQKYKKGKERM). Disordered stretches follow at residues 1505–1551 (QQKY…KKKQ) and 1611–1653 (LRQR…KKSD). The span at 1611 to 1621 (LRQRRKEKKKL) shows a compositional bias: basic residues. Basic and acidic residues predominate over residues 1622–1633 (AREEQKERRKGS). The helical transmembrane segment at 1992-2006 (SEMVCYFVIILNHMT) threads the bilayer. Residues 2007–2013 (SASIITL) lie on the Extracellular side of the membrane. Residues 2014–2025 (LLPILIFLWAML) form a helical membrane-spanning segment. Over 2026-2031 (SVPRPS) the chain is Cytoplasmic. A helical transmembrane segment spans residues 2032 to 2053 (RRFWMMAIVYTEVAIVVKYFFQ). Residues 2054 to 2086 (FGFFPWNKDLEIYKERPYFPPNIIGVEKKEGYV) lie on the Extracellular side of the membrane. Residues 2087–2105 (LYDLIQLLALFFHRSILKC) traverse the membrane as a helical segment. Residues 2106–2259 (HGLWDEDDIV…HPDYSAVTDV (154 aa)) lie on the Cytoplasmic side of the membrane. Disordered stretches follow at residues 2120 to 2139 (DKEGSDDELSLDQGRRGSSD) and 2164 to 2205 (IRRK…SVLS). Positions 2170–2197 (CSSSQISPRSSFSSNRSKRGSTSTRNSS) are enriched in low complexity. Residues 2260 to 2279 (YVLMFLADTVDFIIIVFGFW) traverse the membrane as a helical segment. At 2280-2301 (AFGKHSAAADITSSLSEDQVPG) the chain is on the extracellular side. The chain crosses the membrane as a helical span at residues 2302-2322 (PFLVMVLIQFGTMVVDRALYL). Topologically, residues 2323–2326 (RKTV) are cytoplasmic. Residues 2327 to 2350 (LGKVIFQVILVFGIHFWMFFILPG) form a helical membrane-spanning segment. Topologically, residues 2351-2359 (VTERKFSQN) are extracellular. A helical membrane pass occupies residues 2360-2382 (LVAQLWYFVKCVYFGLSAYQIRC). Topologically, residues 2383 to 2467 (GYPTRVLGNF…YPQPRGQKKK (85 aa)) are cytoplasmic. A helical transmembrane segment spans residues 2468–2491 (KAVKYGMGGMIIVLLICIVWFPLL). The Extracellular segment spans residues 2492–2739 (FMSLIKSVAG…PSLGFLAGYG (248 aa)). Asn-2692 carries an N-linked (GlcNAc...) asparagine glycan. The chain crosses the membrane as a helical span at residues 2740–2760 (IMGLYASVVLVIGKFVREFFS). Residues 2761-2822 (GISHSIMFEE…MIKWTREKTN (62 aa)) lie on the Cytoplasmic side of the membrane.

It belongs to the PIEZO (TC 1.A.75) family. Homotrimer; the homotrimer forms a propeller-shaped Piezo channel with a cation-ion conducting pore. Heterotrimeric interaction may occur between PIEZO1 and PIEZO2. Interacts with STOM13. Interacts with TMC7; the interaction inhibits PIEZO2-conducted mechanically activated currents. Interacts with TMC1; the interaction may be part of the MET complex. Interacts with MDFIC (via C-terminus); the interaction prolongs Piezo channel inactivation. Interacts with MDFI (via C-terminus); the interaction prolongs Piezo channel inactivation. Expressed in bladder, colon, and lung, but less abundant in kidney or skin. Strong expression is observed in dorsal root ganglia (DRG) sensory neurons. Expressed in a wide range of cutaneous low-threshold mechanoreceptors (LTMRs), including Merkel cells and Meissner's corpuscles. Expressed in sensory neurons. Expressed in cochlear inner and outer hair cells and vestibular organ hair cells. Expressed in pulmonary neuroepithelial cell bodies. Expressed in bladder urothelium and sensory neurons of the lower urinary tract. Expressed in sensory endings of proprioceptors innervating muscle spindles and Golgi tendon organs.

Its subcellular location is the cell membrane. It carries out the reaction Ca(2+)(in) = Ca(2+)(out). Regulated by auxillary subunits MDFIC and MDFI. Channel activity is inhibited by TMEM120aa. Phosphatidic acid and lysophosphatidic acid inhibit Piezo2 channel activity. Its function is as follows. Pore-forming subunit of the mechanosensitive non-specific cation Piezo channel required for rapidly adapting mechanically activated (MA) currents and has a key role in sensing touch and tactile pain. Piezo channels are homotrimeric three-blade propeller-shaped structures that utilize a cap-motion and plug-and-latch mechanism to gate their ion-conducting pathways. Expressed in sensory neurons, is essential for diverse physiological processes, including respiratory control, systemic metabolism, urinary function, and proprioception. Mediates airway stretch sensing, enabling efficient respiration at birth and maintaining normal breathing in adults. It regulates brown and beige adipose tissue morphology and function, preventing systemic hypermetabolism. In the lower urinary tract, acts as a sensor in both the bladder urothelium and innervating sensory neurons and is required for bladder-stretch sensing and urethral micturition reflexes, ensuring proper urinary function. Additionally, Piezo2 serves as the principal mechanotransducer in proprioceptors, facilitating proprioception and coordinated body movements. In inner ear hair cells, PIEZO1/2 subunits may constitute part of the mechanotransducer (MET) non-selective cation channel complex where they may act as pore-forming ion-conducting component in the complex. Required for Merkel-cell mechanotransduction. Plays a major role in light-touch mechanosensation. This chain is Piezo-type mechanosensitive ion channel component 2, found in Mus musculus (Mouse).